The chain runs to 475 residues: Aspartyl/glutamyl-tRNA(Asn/Gln) amidotransferase subunit B (475 aa).

This sequence belongs to the GatB/GatE family. GatB subfamily. As to quaternary structure, heterotrimer of A, B and C subunits.

It catalyses the reaction L-glutamyl-tRNA(Gln) + L-glutamine + ATP + H2O = L-glutaminyl-tRNA(Gln) + L-glutamate + ADP + phosphate + H(+). It carries out the reaction L-aspartyl-tRNA(Asn) + L-glutamine + ATP + H2O = L-asparaginyl-tRNA(Asn) + L-glutamate + ADP + phosphate + 2 H(+). Allows the formation of correctly charged Asn-tRNA(Asn) or Gln-tRNA(Gln) through the transamidation of misacylated Asp-tRNA(Asn) or Glu-tRNA(Gln) in organisms which lack either or both of asparaginyl-tRNA or glutaminyl-tRNA synthetases. The reaction takes place in the presence of glutamine and ATP through an activated phospho-Asp-tRNA(Asn) or phospho-Glu-tRNA(Gln). The polypeptide is Aspartyl/glutamyl-tRNA(Asn/Gln) amidotransferase subunit B (Staphylococcus aureus (strain COL)).